Consider the following 193-residue polypeptide: Peptidyl-tRNA hydrolase (193 aa).

A tRNA-binding site is contributed by tyrosine 17. Histidine 22 functions as the Proton acceptor in the catalytic mechanism. Tyrosine 68, asparagine 70, and asparagine 116 together coordinate tRNA.

This sequence belongs to the PTH family. In terms of assembly, monomer.

Its subcellular location is the cytoplasm. The enzyme catalyses an N-acyl-L-alpha-aminoacyl-tRNA + H2O = an N-acyl-L-amino acid + a tRNA + H(+). Hydrolyzes ribosome-free peptidyl-tRNAs (with 1 or more amino acids incorporated), which drop off the ribosome during protein synthesis, or as a result of ribosome stalling. In terms of biological role, catalyzes the release of premature peptidyl moieties from peptidyl-tRNA molecules trapped in stalled 50S ribosomal subunits, and thus maintains levels of free tRNAs and 50S ribosomes. This chain is Peptidyl-tRNA hydrolase, found in Acinetobacter baumannii (strain AB307-0294).